We begin with the raw amino-acid sequence, 161 residues long: Small ribosomal subunit protein uS15 (161 aa).

Residues 1 to 13 (MAGKRRKKGRSHS) are compositionally biased toward basic residues. The interval 1 to 22 (MAGKRRKKGRSHSTRPATPTVP) is disordered.

Belongs to the universal ribosomal protein uS15 family. Part of the 30S ribosomal subunit.

This chain is Small ribosomal subunit protein uS15, found in Hyperthermus butylicus (strain DSM 5456 / JCM 9403 / PLM1-5).